We begin with the raw amino-acid sequence, 438 residues long: Citrate synthase (438 aa).

Catalysis depends on residues H306 and D364.

This sequence belongs to the citrate synthase family.

It catalyses the reaction oxaloacetate + acetyl-CoA + H2O = citrate + CoA + H(+). Its pathway is carbohydrate metabolism; tricarboxylic acid cycle; isocitrate from oxaloacetate: step 1/2. The protein is Citrate synthase (gltA) of Bartonella quintana (strain Toulouse) (Rochalimaea quintana).